The primary structure comprises 618 residues: Leucine aminopeptidase 2 (618 aa).

Residues 139–141 (QCQ) and 271–276 (PYGGME) contribute to the a peptide site. Residue H300 coordinates Zn(2+). E301 acts as the Proton acceptor in catalysis. Residues H304 and E323 each coordinate Zn(2+). Y388 functions as the Proton donor in the catalytic mechanism.

Belongs to the peptidase M1 family. Zn(2+) is required as a cofactor.

It is found in the cytoplasm. The protein localises to the nucleus. It catalyses the reaction an epoxide + H2O = an ethanediol. In terms of biological role, aminopeptidase that preferentially cleaves di- and tripeptides. Also has low epoxide hydrolase activity (in vitro). Can hydrolyze the epoxide leukotriene LTA(4) but it forms preferentially 5,6-dihydroxy-7,9,11,14-eicosatetraenoic acid rather than the cytokine leukotriene B(4) as the product compared to the homologous mammalian enzyme (in vitro). This is Leucine aminopeptidase 2 from Aspergillus niger (strain ATCC MYA-4892 / CBS 513.88 / FGSC A1513).